A 392-amino-acid polypeptide reads, in one-letter code: Homoserine O-acetyltransferase (392 aa).

Positions 52 to 356 (NVVVVLHALT…ICGHDGFLVE (305 aa)) constitute an AB hydrolase-1 domain. Ser157 acts as the Nucleophile in catalysis. Arg227 is a binding site for substrate. Active-site residues include Asp320 and His350. Residue Asp351 participates in substrate binding. Positions 373–392 (SQSAGPGGAGPGSRKGTTRR) are disordered.

This sequence belongs to the AB hydrolase superfamily. MetX family. In terms of assembly, homodimer.

It is found in the cytoplasm. The catalysed reaction is L-homoserine + acetyl-CoA = O-acetyl-L-homoserine + CoA. Its pathway is amino-acid biosynthesis; L-methionine biosynthesis via de novo pathway; O-acetyl-L-homoserine from L-homoserine: step 1/1. In terms of biological role, transfers an acetyl group from acetyl-CoA to L-homoserine, forming acetyl-L-homoserine. In Mycolicibacterium paratuberculosis (strain ATCC BAA-968 / K-10) (Mycobacterium paratuberculosis), this protein is Homoserine O-acetyltransferase.